The sequence spans 575 residues: 2-isopropylmalate synthase (575 aa).

The 275-residue stretch at 31 to 305 folds into the Pyruvate carboxyltransferase domain; the sequence is PTWLSTDLRD…APGLDFSDIA (275 aa). Mg(2+) contacts are provided by aspartate 40, histidine 244, histidine 246, and asparagine 280. A regulatory domain region spans residues 437–575; the sequence is PVQASPDFSD…RFAGEEQGKG (139 aa).

Belongs to the alpha-IPM synthase/homocitrate synthase family. LeuA type 2 subfamily. Homodimer. It depends on Mg(2+) as a cofactor.

It is found in the cytoplasm. It carries out the reaction 3-methyl-2-oxobutanoate + acetyl-CoA + H2O = (2S)-2-isopropylmalate + CoA + H(+). The protein operates within amino-acid biosynthesis; L-leucine biosynthesis; L-leucine from 3-methyl-2-oxobutanoate: step 1/4. Its function is as follows. Catalyzes the condensation of the acetyl group of acetyl-CoA with 3-methyl-2-oxobutanoate (2-ketoisovalerate) to form 3-carboxy-3-hydroxy-4-methylpentanoate (2-isopropylmalate). This is 2-isopropylmalate synthase from Herbaspirillum seropedicae (strain SmR1).